Consider the following 105-residue polypeptide: Large ribosomal subunit protein uL24 (105 aa).

Belongs to the universal ribosomal protein uL24 family. In terms of assembly, part of the 50S ribosomal subunit.

Its function is as follows. One of two assembly initiator proteins, it binds directly to the 5'-end of the 23S rRNA, where it nucleates assembly of the 50S subunit. Functionally, one of the proteins that surrounds the polypeptide exit tunnel on the outside of the subunit. This is Large ribosomal subunit protein uL24 from Mycolicibacterium vanbaalenii (strain DSM 7251 / JCM 13017 / BCRC 16820 / KCTC 9966 / NRRL B-24157 / PYR-1) (Mycobacterium vanbaalenii).